Here is an 86-residue protein sequence, read N- to C-terminus: uncharacterized protein (86 aa).

TPR repeat units lie at residues 8 to 41 (AEYY…NPFY) and 42 to 75 (RDAW…EKHL).

This is an uncharacterized protein from Methanocaldococcus jannaschii (strain ATCC 43067 / DSM 2661 / JAL-1 / JCM 10045 / NBRC 100440) (Methanococcus jannaschii).